A 187-amino-acid chain; its full sequence is UPF0340 protein SGO_0411 (187 aa).

It belongs to the UPF0340 family.

In Streptococcus gordonii (strain Challis / ATCC 35105 / BCRC 15272 / CH1 / DL1 / V288), this protein is UPF0340 protein SGO_0411.